A 344-amino-acid polypeptide reads, in one-letter code: Anthranilate phosphoribosyltransferase (344 aa).

5-phospho-alpha-D-ribose 1-diphosphate-binding positions include Gly-86, 89-90 (GD), Thr-94, 96-99 (NIST), 114-122 (KHGNKSASG), and Ser-126. Residue Gly-86 coordinates anthranilate. Ser-98 serves as a coordination point for Mg(2+). Asn-117 is a binding site for anthranilate. Residue Arg-172 coordinates anthranilate. Mg(2+) is bound by residues Asp-231 and Glu-232.

The protein belongs to the anthranilate phosphoribosyltransferase family. As to quaternary structure, homodimer. Mg(2+) is required as a cofactor.

It catalyses the reaction N-(5-phospho-beta-D-ribosyl)anthranilate + diphosphate = 5-phospho-alpha-D-ribose 1-diphosphate + anthranilate. Its pathway is amino-acid biosynthesis; L-tryptophan biosynthesis; L-tryptophan from chorismate: step 2/5. Catalyzes the transfer of the phosphoribosyl group of 5-phosphorylribose-1-pyrophosphate (PRPP) to anthranilate to yield N-(5'-phosphoribosyl)-anthranilate (PRA). This Prochlorococcus marinus (strain AS9601) protein is Anthranilate phosphoribosyltransferase.